A 213-amino-acid chain; its full sequence is KHG/KDPG aldolase (213 aa).

The active-site Proton acceptor is the Glu-45. Pyruvate-binding residues include Arg-49, Thr-73, and Lys-133. Residue Lys-133 is the Schiff-base intermediate with substrate of the active site.

The protein belongs to the KHG/KDPG aldolase family. As to quaternary structure, homotrimer.

Its subcellular location is the cytoplasm. The catalysed reaction is 2-dehydro-3-deoxy-6-phospho-D-gluconate = D-glyceraldehyde 3-phosphate + pyruvate. It catalyses the reaction (4S)-4-hydroxy-2-oxoglutarate = glyoxylate + pyruvate. It functions in the pathway carbohydrate acid metabolism; 2-dehydro-3-deoxy-D-gluconate degradation; D-glyceraldehyde 3-phosphate and pyruvate from 2-dehydro-3-deoxy-D-gluconate: step 2/2. It participates in carbohydrate metabolism; glyoxylate and dicarboxylate metabolism. Involved in the degradation of glucose via the Entner-Doudoroff pathway. Catalyzes the reversible, stereospecific retro-aldol cleavage of 2-keto-3-deoxy-6-phosphogluconate (KDPG) to pyruvate and D-glyceraldehyde-3-phosphate. In addition to its KDPG aldolase activity, catalyzes the reversible cleavage of 2-keto-4-hydroxyglutarate (KHG) to glyoxylate and pyruvate. The enzyme is stereoselective for the S-enantiomer of KHG. Cleavage of KHG could serve in tricarboxylic acid (TCA) cycle regulation or, when operating in the reverse direction, in the detoxification of glyoxylate. This chain is KHG/KDPG aldolase (eda), found in Escherichia coli O157:H7.